A 246-amino-acid chain; its full sequence is Probable transcriptional regulatory protein CLK_2466 (246 aa).

This sequence belongs to the TACO1 family.

The protein resides in the cytoplasm. This chain is Probable transcriptional regulatory protein CLK_2466, found in Clostridium botulinum (strain Loch Maree / Type A3).